The following is a 234-amino-acid chain: Ion-translocating oxidoreductase complex subunit E (234 aa).

5 helical membrane passes run 62 to 82 (LGLGLATMLVLTCTNTVISLF), 92 to 112 (IPIYVMIIATTVTAVQLLMNA), 116 to 136 (TLYQSLGIFIPLIVTNCIIIG), 151 to 171 (IWDGFSMGLGMALSLTILGAL), and 205 to 225 (SFLLFILPPGAFIGLGLLLAI).

This sequence belongs to the NqrDE/RnfAE family. The complex is composed of six subunits: RnfA, RnfB, RnfC, RnfD, RnfE and RnfG.

The protein resides in the cell inner membrane. In terms of biological role, part of a membrane-bound complex that couples electron transfer with translocation of ions across the membrane. This Haemophilus influenzae (strain PittGG) protein is Ion-translocating oxidoreductase complex subunit E.